The sequence spans 353 residues: Photosystem II protein D1 (353 aa).

The residue at position 2 (T2) is an N-acetylthreonine. Phosphothreonine is present on T2. A run of 3 helical transmembrane segments spans residues 29 to 46 (YIGWFGVLMIPTLLTATS), 118 to 133 (HFLLGVACYMGREWEL), and 142 to 156 (WIAVAYSAPVAAATA). H118 serves as a coordination point for chlorophyll a. Y126 provides a ligand contact to pheophytin a. [CaMn4O5] cluster-binding residues include D170 and E189. Residues 197-218 (FHMLGVAGVFGGSLFSAMHGSL) traverse the membrane as a helical segment. H198 is a chlorophyll a binding site. A quinone contacts are provided by residues H215 and 264–265 (SF). A Fe cation-binding site is contributed by H215. A Fe cation-binding site is contributed by H272. Residues 274 to 288 (FLAAWPVVGIWFTAL) traverse the membrane as a helical segment. [CaMn4O5] cluster-binding residues include H332, E333, D342, and A344. The propeptide occupies 345 to 353 (AVEAPSTIG).

It belongs to the reaction center PufL/M/PsbA/D family. In terms of assembly, PSII is composed of 1 copy each of membrane proteins PsbA, PsbB, PsbC, PsbD, PsbE, PsbF, PsbH, PsbI, PsbJ, PsbK, PsbL, PsbM, PsbT, PsbX, PsbY, PsbZ, Psb30/Ycf12, at least 3 peripheral proteins of the oxygen-evolving complex and a large number of cofactors. It forms dimeric complexes. The cofactor is The D1/D2 heterodimer binds P680, chlorophylls that are the primary electron donor of PSII, and subsequent electron acceptors. It shares a non-heme iron and each subunit binds pheophytin, quinone, additional chlorophylls, carotenoids and lipids. D1 provides most of the ligands for the Mn4-Ca-O5 cluster of the oxygen-evolving complex (OEC). There is also a Cl(-1) ion associated with D1 and D2, which is required for oxygen evolution. The PSII complex binds additional chlorophylls, carotenoids and specific lipids.. Tyr-161 forms a radical intermediate that is referred to as redox-active TyrZ, YZ or Y-Z. Post-translationally, C-terminally processed by CTPA; processing is essential to allow assembly of the oxygen-evolving complex and thus photosynthetic growth.

The protein resides in the plastid. It localises to the chloroplast thylakoid membrane. The catalysed reaction is 2 a plastoquinone + 4 hnu + 2 H2O = 2 a plastoquinol + O2. In terms of biological role, photosystem II (PSII) is a light-driven water:plastoquinone oxidoreductase that uses light energy to abstract electrons from H(2)O, generating O(2) and a proton gradient subsequently used for ATP formation. It consists of a core antenna complex that captures photons, and an electron transfer chain that converts photonic excitation into a charge separation. The D1/D2 (PsbA/PsbD) reaction center heterodimer binds P680, the primary electron donor of PSII as well as several subsequent electron acceptors. The chain is Photosystem II protein D1 from Lemna minor (Common duckweed).